The following is a 279-amino-acid chain: 3-methyl-2-oxobutanoate hydroxymethyltransferase (279 aa).

Residues Asp43 and Asp82 each contribute to the Mg(2+) site. 3-methyl-2-oxobutanoate is bound by residues 43 to 44, Asp82, and Lys112; that span reads DS. Residue Glu114 coordinates Mg(2+). The active-site Proton acceptor is Glu181.

The protein belongs to the PanB family. Homodecamer; pentamer of dimers. The cofactor is Mg(2+).

The protein resides in the cytoplasm. The enzyme catalyses 3-methyl-2-oxobutanoate + (6R)-5,10-methylene-5,6,7,8-tetrahydrofolate + H2O = 2-dehydropantoate + (6S)-5,6,7,8-tetrahydrofolate. It functions in the pathway cofactor biosynthesis; (R)-pantothenate biosynthesis; (R)-pantoate from 3-methyl-2-oxobutanoate: step 1/2. In terms of biological role, catalyzes the reversible reaction in which hydroxymethyl group from 5,10-methylenetetrahydrofolate is transferred onto alpha-ketoisovalerate to form ketopantoate. This is 3-methyl-2-oxobutanoate hydroxymethyltransferase from Halalkalibacterium halodurans (strain ATCC BAA-125 / DSM 18197 / FERM 7344 / JCM 9153 / C-125) (Bacillus halodurans).